A 185-amino-acid chain; its full sequence is Peptidyl-tRNA hydrolase (185 aa).

Y14 serves as a coordination point for tRNA. H19 acts as the Proton acceptor in catalysis. The tRNA site is built by Y65, N67, and N113.

Belongs to the PTH family. Monomer.

The protein localises to the cytoplasm. The catalysed reaction is an N-acyl-L-alpha-aminoacyl-tRNA + H2O = an N-acyl-L-amino acid + a tRNA + H(+). Functionally, hydrolyzes ribosome-free peptidyl-tRNAs (with 1 or more amino acids incorporated), which drop off the ribosome during protein synthesis, or as a result of ribosome stalling. Catalyzes the release of premature peptidyl moieties from peptidyl-tRNA molecules trapped in stalled 50S ribosomal subunits, and thus maintains levels of free tRNAs and 50S ribosomes. The chain is Peptidyl-tRNA hydrolase from Rickettsia canadensis (strain McKiel).